A 179-amino-acid chain; its full sequence is Small heat shock protein hspK (179 aa).

In terms of domain architecture, sHSP spans 32 to 178 (HRINIWRPTV…DRLKIPIQSK (147 aa)). The tract at residues 80–122 (KKSKGGLNNLPSSSSSINSDSTTNTNTNTTTTTTTAPPPPSDA) is disordered. Over residues 87 to 114 (NNLPSSSSSINSDSTTNTNTNTTTTTTT) the composition is skewed to low complexity.

Belongs to the small heat shock protein (HSP20) family.

The polypeptide is Small heat shock protein hspK (hspK) (Dictyostelium discoideum (Social amoeba)).